Here is a 288-residue protein sequence, read N- to C-terminus: Threonine-rich protein (288 aa).

The first 20 residues, 1-20, serve as a signal peptide directing secretion; it reads MKAFLLSLATLLACIVLTES. Positions 141 to 150 are enriched in polar residues; sequence TTVTPQTTDG. Positions 141-260 are disordered; sequence TTVTPQTTDG…PAPTTTPAPT (120 aa). Low complexity predominate over residues 151 to 253; the sequence is NTTTEAPTST…TAAPTTTPAP (103 aa).

Component of the acid-insoluble and acid-soluble organic matrix of the aragonitic skeleton (at protein level).

Its subcellular location is the secreted. The polypeptide is Threonine-rich protein (Acropora millepora (Staghorn coral)).